A 365-amino-acid polypeptide reads, in one-letter code: uncharacterized protein (365 aa).

Basic and acidic residues-rich tracts occupy residues 1–27 (MDNV…EDHS) and 315–339 (AKDD…ETPK). Disordered stretches follow at residues 1-31 (MDNV…NSYQ) and 308-365 (KEEK…CLIS). Positions 340–353 (KASNTPRRNKSNTQ) are enriched in polar residues.

To yeast YGL082w. Interacts with sad1.

It localises to the cytoplasm. This is an uncharacterized protein from Schizosaccharomyces pombe (strain 972 / ATCC 24843) (Fission yeast).